The following is a 290-amino-acid chain: 33 kDa chaperonin (290 aa).

Disulfide bonds link cysteine 235/cysteine 237 and cysteine 268/cysteine 271.

It belongs to the HSP33 family. Post-translationally, under oxidizing conditions two disulfide bonds are formed involving the reactive cysteines. Under reducing conditions zinc is bound to the reactive cysteines and the protein is inactive.

The protein localises to the cytoplasm. Its function is as follows. Redox regulated molecular chaperone. Protects both thermally unfolding and oxidatively damaged proteins from irreversible aggregation. Plays an important role in the bacterial defense system toward oxidative stress. This chain is 33 kDa chaperonin, found in Streptococcus pneumoniae serotype 19F (strain G54).